The following is a 465-amino-acid chain: Transcriptional protein swt1 (465 aa).

The PINc domain occupies Gly70–Ile190.

This sequence belongs to the SWT1 family.

The protein localises to the cytoplasm. The protein resides in the nucleus. Its function is as follows. Involved in transcription. This is Transcriptional protein swt1 from Schizosaccharomyces pombe (strain 972 / ATCC 24843) (Fission yeast).